We begin with the raw amino-acid sequence, 182 residues long: uncharacterized protein (182 aa).

An N-terminal signal peptide occupies residues 1–26; it reads MIRALCTIVLIAAGVAVALYLSLVYG. A disordered region spans residues 68 to 90; that stretch reads YTERPYPVSSTQSPTTTQSPTTT. The span at 74–90 shows a compositional bias: low complexity; sequence PVSSTQSPTTTQSPTTT.

This is an uncharacterized protein from Dryophytes versicolor (chameleon treefrog).